A 91-amino-acid chain; its full sequence is UPF0367 protein cce_2199 (91 aa).

Belongs to the UPF0367 family.

This Crocosphaera subtropica (strain ATCC 51142 / BH68) (Cyanothece sp. (strain ATCC 51142)) protein is UPF0367 protein cce_2199.